The chain runs to 368 residues: Cytochrome b (368 aa).

Helical transmembrane passes span 33–53, 77–99, 112–132, and 178–198; these read FGSL…FLAM, WLIR…THTG, TWMV…LGYV, and FYAL…MHII. Residues His83 and His97 each contribute to the heme b site. Residues His182 and His196 each coordinate heme b. His201 lines the a ubiquinone pocket. Transmembrane regions (helical) follow at residues 224–244, 288–308, 323–343, and 345–365; these read FSAK…SVVL, LGGV…PMMN, IAFW…SKPV, and SPFE…YMIM.

This sequence belongs to the cytochrome b family. In terms of assembly, the main subunits of complex b-c1 are: cytochrome b, cytochrome c1 and the Rieske protein. Heme b serves as cofactor.

It is found in the mitochondrion inner membrane. In terms of biological role, component of the ubiquinol-cytochrome c reductase complex (complex III or cytochrome b-c1 complex) that is part of the mitochondrial respiratory chain. The b-c1 complex mediates electron transfer from ubiquinol to cytochrome c. Contributes to the generation of a proton gradient across the mitochondrial membrane that is then used for ATP synthesis. The polypeptide is Cytochrome b (mt:Cyt-b) (Bugula neritina (Brown bryozoan)).